The chain runs to 205 residues: Urease accessory protein UreG (205 aa).

14-21 (GPVGSGKT) serves as a coordination point for GTP.

The protein belongs to the SIMIBI class G3E GTPase family. UreG subfamily. As to quaternary structure, homodimer. UreD, UreF and UreG form a complex that acts as a GTP-hydrolysis-dependent molecular chaperone, activating the urease apoprotein by helping to assemble the nickel containing metallocenter of UreC. The UreE protein probably delivers the nickel.

It localises to the cytoplasm. Its function is as follows. Facilitates the functional incorporation of the urease nickel metallocenter. This process requires GTP hydrolysis, probably effectuated by UreG. The sequence is that of Urease accessory protein UreG from Escherichia coli O157:H7.